A 443-amino-acid polypeptide reads, in one-letter code: Xaa-Pro dipeptidase (443 aa).

Aspartate 246, aspartate 257, histidine 339, glutamate 384, and glutamate 423 together coordinate Mn(2+).

The protein belongs to the peptidase M24B family. Bacterial-type prolidase subfamily. Mn(2+) is required as a cofactor.

The enzyme catalyses Xaa-L-Pro dipeptide + H2O = an L-alpha-amino acid + L-proline. In terms of biological role, splits dipeptides with a prolyl residue in the C-terminal position. This Salmonella paratyphi B (strain ATCC BAA-1250 / SPB7) protein is Xaa-Pro dipeptidase.